Consider the following 377-residue polypeptide: MKFPGPLENQRLSSLLERAISREAQMWKVNVPKIPTNQNVSPSQRDEVIQWLAKLKYQFNLYPETFALASSLLDRFLATVKAHPKYLNCIAISCFFLAAKTVEEDEKIPVLKVLARDSFCGCSSSEILRMERIILDKLNWDLHTATPLDFLHIFHAIAVSARPQLLFSLPKLSPSQHLAVLTKQLLHCMACNQLLQFKGSMLALAMVSLEMEKLIPDWLPLTIELLQKAQMDSSQLIHCRELVAYHLSALQSALPLNSVYVYRPLKHTLVTCDKGAFKLHPSSVSGPDFSKDNSKPEVPVRGPAAFHLHLPAASGCKQTSAKRKVEEMEVDDFYDGIKRLYNEDNGPENVGSVCGTDLSRQEGHASPCPPLQPVSVM.

The interval 356–377 (TDLSRQEGHASPCPPLQPVSVM) is disordered. Residues 367 to 377 (PCPPLQPVSVM) are compositionally biased toward pro residues.

The protein belongs to the cyclin family.

The protein is Cyclin-I (Ccni) of Mus musculus (Mouse).